Here is a 361-residue protein sequence, read N- to C-terminus: S-adenosylmethionine decarboxylase proenzyme (361 aa).

Active-site residues include glutamate 13 and glutamate 16. Residue serine 73 is the Schiff-base intermediate with substrate; via pyruvic acid of the active site. Serine 73 carries the pyruvic acid (Ser); by autocatalysis modification. Residue cysteine 87 is the Proton donor; for catalytic activity of the active site. Residues serine 236 and histidine 249 each act as proton acceptor; for processing activity in the active site.

Belongs to the eukaryotic AdoMetDC family. It depends on pyruvate as a cofactor. Is synthesized initially as an inactive proenzyme. Formation of the active enzyme involves a self-maturation process in which the active site pyruvoyl group is generated from an internal serine residue via an autocatalytic post-translational modification. Two non-identical subunits are generated from the proenzyme in this reaction, and the pyruvate is formed at the N-terminus of the alpha chain, which is derived from the carboxyl end of the proenzyme. The post-translation cleavage follows an unusual pathway, termed non-hydrolytic serinolysis, in which the side chain hydroxyl group of the serine supplies its oxygen atom to form the C-terminus of the beta chain, while the remainder of the serine residue undergoes an oxidative deamination to produce ammonia and the pyruvoyl group blocking the N-terminus of the alpha chain.

It catalyses the reaction S-adenosyl-L-methionine + H(+) = S-adenosyl 3-(methylsulfanyl)propylamine + CO2. It participates in amine and polyamine biosynthesis; S-adenosylmethioninamine biosynthesis; S-adenosylmethioninamine from S-adenosyl-L-methionine: step 1/1. The polypeptide is S-adenosylmethionine decarboxylase proenzyme (SAMDC) (Nicotiana tabacum (Common tobacco)).